Here is an 82-residue protein sequence, read N- to C-terminus: Cytochrome c-551 (82 aa).

Heme c contacts are provided by Cys12, Cys15, His16, and Met61.

Binds 1 heme c group covalently per subunit.

This Azotobacter vinelandii protein is Cytochrome c-551.